Consider the following 517-residue polypeptide: Fluconazole resistance protein 1 (517 aa).

The segment at residues 26–52 (CDSCRIKKTKCDGKKPCNRCTLDNKIC) is a DNA-binding region (zn(2)-C6 fungal-type). Disordered stretches follow at residues 106 to 137 (KSVD…QNST), 250 to 270 (SAQF…QQQQ), 284 to 307 (SDIE…PPTS), and 378 to 403 (GSIQ…VSSF). A compositionally biased stretch (low complexity) spans 113-124 (SSPASSTPNSSS). A compositionally biased stretch (polar residues) spans 250 to 260 (SAQFSKGTFSP). Positions 261–270 (QQQQLQQQQQ) are enriched in low complexity. The segment covering 298 to 307 (NSGSVSPPTS) has biased composition (polar residues). Over residues 388–398 (GSVHKPVRNHS) the composition is skewed to basic residues.

The protein localises to the nucleus. Its function is as follows. Transcription factor that acts as a negative regulator of fluconazole resistance in C.albicans. Also confers fluconazole resistance in S.cerevisiae by activation of the PDR5 gene. The polypeptide is Fluconazole resistance protein 1 (FCR1) (Candida albicans (Yeast)).